The sequence spans 505 residues: 2,3-bisphosphoglycerate-independent phosphoglycerate mutase (505 aa).

Mn(2+)-binding residues include D12 and S62. Residue S62 is the Phosphoserine intermediate of the active site. Substrate is bound by residues H123, 153-154, R185, R191, 257-260, and K330; these read RD and RPDR. Mn(2+) contacts are provided by D397, H401, D438, H439, and H456.

The protein belongs to the BPG-independent phosphoglycerate mutase family. In terms of assembly, monomer. Mn(2+) is required as a cofactor.

It catalyses the reaction (2R)-2-phosphoglycerate = (2R)-3-phosphoglycerate. It functions in the pathway carbohydrate degradation; glycolysis; pyruvate from D-glyceraldehyde 3-phosphate: step 3/5. Its function is as follows. Catalyzes the interconversion of 2-phosphoglycerate and 3-phosphoglycerate. The protein is 2,3-bisphosphoglycerate-independent phosphoglycerate mutase of Staphylococcus aureus (strain MRSA252).